The primary structure comprises 183 residues: MKLSAVAGRYARAFLNIAIENEKEDEYLRFLDFVCNVYESNKDLFDNPVVKPEKKVTLIKSVLEEFGEEMDEFQERFLMLLFERKRQKLLRNIHELFEYEKILSEQKVPADLRIAHVPKEEELTLLRKFIRKYALKDPVFKTTVDESLIAGAVVEFEGFRLDTTVQGRLKRLSQETLKRGEMS.

This sequence belongs to the ATPase delta chain family. F-type ATPases have 2 components, F(1) - the catalytic core - and F(0) - the membrane proton channel. F(1) has five subunits: alpha(3), beta(3), gamma(1), delta(1), epsilon(1). F(0) has three main subunits: a(1), b(2) and c(10-14). The alpha and beta chains form an alternating ring which encloses part of the gamma chain. F(1) is attached to F(0) by a central stalk formed by the gamma and epsilon chains, while a peripheral stalk is formed by the delta and b chains.

It localises to the cell inner membrane. F(1)F(0) ATP synthase produces ATP from ADP in the presence of a proton or sodium gradient. F-type ATPases consist of two structural domains, F(1) containing the extramembraneous catalytic core and F(0) containing the membrane proton channel, linked together by a central stalk and a peripheral stalk. During catalysis, ATP synthesis in the catalytic domain of F(1) is coupled via a rotary mechanism of the central stalk subunits to proton translocation. In terms of biological role, this protein is part of the stalk that links CF(0) to CF(1). It either transmits conformational changes from CF(0) to CF(1) or is implicated in proton conduction. This Thermotoga neapolitana (strain ATCC 49049 / DSM 4359 / NBRC 107923 / NS-E) protein is ATP synthase subunit delta.